The sequence spans 64 residues: MARKDQISHRGPLSGNNRSHALNATKRKFNLNLQQITLKTASGKKIRLKVSAKTKKTLRKWGHV.

The segment at 1-23 is disordered; sequence MARKDQISHRGPLSGNNRSHALN.

It belongs to the bacterial ribosomal protein bL28 family.

The polypeptide is Large ribosomal subunit protein bL28 (Mesomycoplasma hyopneumoniae (strain J / ATCC 25934 / NCTC 10110) (Mycoplasma hyopneumoniae)).